Here is a 195-residue protein sequence, read N- to C-terminus: Probable DNA-directed RNA polymerase subunit delta (195 aa).

The HTH HARE-type domain occupies 14 to 81 (FALVEIATAI…GNNEWALRAW (68 aa)). Acidic residues-rich tracts occupy residues 120-172 (DDDV…DESI) and 181-195 (GGDD…DQEK). The interval 120–195 (DDDVIDYNDD…DDLSDGDQEK (76 aa)) is disordered.

It belongs to the RpoE family. In terms of assembly, RNAP is composed of a core of 2 alpha, a beta and a beta' subunits. The core is associated with a delta subunit and one of several sigma factors.

Participates in both the initiation and recycling phases of transcription. In the presence of the delta subunit, RNAP displays an increased specificity of transcription, a decreased affinity for nucleic acids, and an increased efficiency of RNA synthesis because of enhanced recycling. This chain is Probable DNA-directed RNA polymerase subunit delta, found in Leuconostoc mesenteroides subsp. mesenteroides (strain ATCC 8293 / DSM 20343 / BCRC 11652 / CCM 1803 / JCM 6124 / NCDO 523 / NBRC 100496 / NCIMB 8023 / NCTC 12954 / NRRL B-1118 / 37Y).